Consider the following 195-residue polypeptide: HTH-type transcriptional regulator BetI (195 aa).

The HTH tetR-type domain occupies 8–68; sequence SIRRRQLIDA…ATMRDITSQL (61 aa). A DNA-binding region (H-T-H motif) is located at residues 31–50; it reads TIAQIARRAGVSTGIISHYF.

The protein operates within amine and polyamine biosynthesis; betaine biosynthesis via choline pathway [regulation]. Repressor involved in the biosynthesis of the osmoprotectant glycine betaine. It represses transcription of the choline transporter BetT and the genes of BetAB involved in the synthesis of glycine betaine. The sequence is that of HTH-type transcriptional regulator BetI from Escherichia coli O127:H6 (strain E2348/69 / EPEC).